The chain runs to 31 residues: Cytochrome b6-f complex subunit 6 (31 aa).

Residues 4-26 (ITSYFGFLLAALTITPALLISLN) form a helical membrane-spanning segment.

This sequence belongs to the PetL family. The 4 large subunits of the cytochrome b6-f complex are cytochrome b6, subunit IV (17 kDa polypeptide, PetD), cytochrome f and the Rieske protein, while the 4 small subunits are PetG, PetL, PetM and PetN. The complex functions as a dimer.

The protein localises to the plastid. Its subcellular location is the chloroplast thylakoid membrane. Its function is as follows. Component of the cytochrome b6-f complex, which mediates electron transfer between photosystem II (PSII) and photosystem I (PSI), cyclic electron flow around PSI, and state transitions. PetL is important for photoautotrophic growth as well as for electron transfer efficiency and stability of the cytochrome b6-f complex. This Dioscorea elephantipes (Elephant's foot yam) protein is Cytochrome b6-f complex subunit 6.